Consider the following 842-residue polypeptide: Pentatricopeptide repeat-containing protein At3g23020 (842 aa).

A disordered region spans residues 40–61 (YVPGTHESDKGPQRSTRNGDRG). The span at 45–59 (HESDKGPQRSTRNGD) shows a compositional bias: basic and acidic residues. PPR repeat units follow at residues 186–220 (NVIHYNIMLRILGKACKWRYVQSLWDEMIRKGIKP), 221–255 (INSTYGTLIDVYSKGGLKVHALCWLGKMSKIGMQP), 256–290 (DEVTTGIVLQMYKKAREFQKAEEFFKKWSCDENKA), 297–331 (SSYTYNTMIDTYGKSGQIKEASETFKRMLEEGIVP), 332–362 (TTVTFNTMIHIYGNNGQLGEVTSLMKTMKLH), 366–400 (DTRTYNILISLHTKNNDIERAGAYFKEMKDDGLKP), 401–435 (DPVSYRTLLYAFSIRHMVEEAEGLIAEMDDDNVEI), 436–470 (DEYTQSALTRMYVEAEMLEKSWSWFKRFHVAGNMS), 474–500 (YSANIDAYGERGYLSEAERVFICCQEV), 504–538 (TVIEYNVMIKAYGISKSCEKACELFESMMSYGVTP), 539–573 (DKCTYNTLVQILASADMPHKGRCYLEKMRETGYVS), 574–608 (DCIPYCAVISSFVKLGQLNMAEEVYKEMVEYNIEP), 609–643 (DVVVYGVLINAFADTGNVQQAMSYVEAMKEAGIPG), 644–674 (NSVIYNSLIKLYTKVGYLDEAEAIYRKLLQS), 682–712 (DVYTSNCMINLYSERSMVRKAEAIFDSMKQR), 716–750 (NEFTFAMMLCMYKKNGRFEEATQIAKQMREMKILT), 751–785 (DPLSYNSVLGLFALDGRFKEAVETFKEMVSSGIQP), and 786–820 (DDSTFKSLGTILMKLGMSKKAVRKIEEIRKKEIKR).

Belongs to the PPR family. P subfamily.

This Arabidopsis thaliana (Mouse-ear cress) protein is Pentatricopeptide repeat-containing protein At3g23020.